We begin with the raw amino-acid sequence, 220 residues long: Flavin-dependent thymidylate synthase (220 aa).

Positions Met1–Tyr208 constitute a ThyX domain. FAD contacts are provided by residues Thr55, Arg78–Arg80, and Glu86. DUMP-binding positions include Gln75–Arg78, Glu86–Arg90, and Arg147. Positions Arg78–Ser88 match the ThyX motif motif. Residues Asn163–Arg165 and Asn169 contribute to the FAD site. Arg174 lines the dUMP pocket. Arg174 functions as the Involved in ionization of N3 of dUMP, leading to its activation in the catalytic mechanism.

It belongs to the thymidylate synthase ThyX family. In terms of assembly, homotetramer. It depends on FAD as a cofactor.

It catalyses the reaction dUMP + (6R)-5,10-methylene-5,6,7,8-tetrahydrofolate + NADPH + H(+) = dTMP + (6S)-5,6,7,8-tetrahydrofolate + NADP(+). It participates in pyrimidine metabolism; dTTP biosynthesis. Its function is as follows. Catalyzes the reductive methylation of 2'-deoxyuridine-5'-monophosphate (dUMP) to 2'-deoxythymidine-5'-monophosphate (dTMP) while utilizing 5,10-methylenetetrahydrofolate (mTHF) as the methyl donor, and NADPH and FADH(2) as the reductant. The polypeptide is Flavin-dependent thymidylate synthase (Thermotoga sp. (strain RQ2)).